The chain runs to 515 residues: Cytochrome P450 705A22 (515 aa).

The helical transmembrane segment at 9–29 (FQNCFIFILIFLLTFLCFFFF) threads the bilayer. Cys-454 lines the heme pocket.

The protein belongs to the cytochrome P450 family. Requires heme as cofactor.

It localises to the membrane. Functionally, plays a role in the gravitropic response of the inflorescence stems and roots. May affect the synthesis of flavonols that have a role in regulating auxin transport. The chain is Cytochrome P450 705A22 from Arabidopsis thaliana (Mouse-ear cress).